Consider the following 884-residue polypeptide: Chondroitin sulfate synthase 3 (884 aa).

The Cytoplasmic portion of the chain corresponds to 1–7 (MAVRSRR). Residues 8–28 (PWVSVALGLVLGFTAASWLIA) traverse the membrane as a helical; Signal-anchor for type II membrane protein segment. Residues 29–884 (PRVAELSEKR…LGVRDNRTLS (856 aa)) are Lumenal-facing. The segment at 47–164 (YYGRSATGPR…NGSGDGGAAV (118 aa)) is disordered. Composition is skewed to low complexity over residues 60–69 (QQLLPQPQSR) and 84–96 (PGPQ…PGGP). N-linked (GlcNAc...) asparagine glycans are attached at residues Asn155 and Asn281. The disordered stretch occupies residues 437-456 (SNSEVSKEDQQLGRTPSFNH). Asn712 is a glycosylation site (N-linked (GlcNAc...) asparagine). Positions 722 and 836 each coordinate a divalent metal cation. N-linked (GlcNAc...) asparagine glycosylation occurs at Asn880.

The protein belongs to the chondroitin N-acetylgalactosaminyltransferase family. The cofactor is Co(2+). Mn(2+) serves as cofactor. Cd(2+) is required as a cofactor.

Its subcellular location is the golgi apparatus. It is found in the golgi stack membrane. It carries out the reaction 3-O-(beta-D-GlcA-(1-&gt;3)-beta-D-GalNAc-(1-&gt;4)-beta-D-GlcA-(1-&gt;3)-beta-D-Gal-(1-&gt;3)-beta-D-Gal-(1-&gt;4)-beta-D-Xyl)-L-seryl-[protein] + UDP-N-acetyl-alpha-D-galactosamine = 3-O-(beta-D-GalNAc-(1-&gt;4)-beta-D-GlcA-(1-&gt;3)-beta-D-GalNAc-(1-&gt;4)-beta-D-GlcA-(1-&gt;3)-beta-D-Gal-(1-&gt;3)-beta-D-Gal-(1-&gt;4)-beta-D-Xyl)-L-seryl-[protein] + UDP + H(+). The enzyme catalyses 3-O-{beta-D-GlcA-(1-&gt;3)-[beta-D-GalNAc-(1-&gt;4)-beta-D-GlcA-(1-&gt;3)](n)-beta-D-GalNAc-(1-&gt;4)-beta-D-GlcA-(1-&gt;3)-beta-D-Gal-(1-&gt;3)-beta-D-Gal-(1-&gt;4)-beta-D-Xyl}-L-seryl-[protein] + UDP-N-acetyl-alpha-D-galactosamine = 3-O-{[beta-D-GalNAc-(1-&gt;4)-beta-D-GlcA-(1-&gt;3)](n+1)-beta-D-GalNAc-(1-&gt;4)-beta-D-GlcA-(1-&gt;3)-beta-D-Gal-(1-&gt;3)-beta-D-Gal-(1-&gt;4)-beta-D-Xyl}-L-seryl-[protein] + UDP + H(+). It catalyses the reaction 3-O-(beta-D-GalNAc-(1-&gt;4)-beta-D-GlcA-(1-&gt;3)-beta-D-Gal-(1-&gt;3)-beta-D-Gal-(1-&gt;4)-beta-D-Xyl)-L-seryl-[protein] + UDP-alpha-D-glucuronate = 3-O-(beta-D-GlcA-(1-&gt;3)-beta-D-GalNAc-(1-&gt;4)-beta-D-GlcA-(1-&gt;3)-beta-D-Gal-(1-&gt;3)-beta-D-Gal-(1-&gt;4)-beta-D-Xyl)-L-seryl-[protein] + UDP + H(+). The catalysed reaction is 3-O-{[beta-D-GalNAc-(1-&gt;4)-beta-D-GlcA-(1-&gt;3)](n)-beta-D-GalNAc-(1-&gt;4)-beta-D-GlcA-(1-&gt;3)-beta-D-Gal-(1-&gt;3)-beta-D-Gal-(1-&gt;4)-beta-D-Xyl}-L-seryl-[protein] + UDP-alpha-D-glucuronate = 3-O-{beta-D-GlcA-(1-&gt;3)-[beta-D-GalNAc-(1-&gt;4)-beta-D-GlcA-(1-&gt;3)](n)-beta-D-GalNAc-(1-&gt;4)-beta-D-GlcA-(1-&gt;3)-beta-D-Gal-(1-&gt;3)-beta-D-Gal-(1-&gt;4)-beta-D-Xyl}-L-seryl-[protein] + UDP + H(+). Its function is as follows. Has both beta-1,3-glucuronic acid and beta-1,4-N-acetylgalactosamine transferase activity. Transfers glucuronic acid (GlcUA) from UDP-GlcUA and N-acetylgalactosamine (GalNAc) from UDP-GalNAc to the non-reducing end of the elongating chondroitin polymer. Specific activity is much reduced compared to CHSY1. The polypeptide is Chondroitin sulfate synthase 3 (Chsy3) (Mus musculus (Mouse)).